A 664-amino-acid polypeptide reads, in one-letter code: UvrABC system protein B (664 aa).

In terms of domain architecture, Helicase ATP-binding spans 23–412 (EGLNRGMRFQ…VVEQIIRPTG (390 aa)). 36 to 43 (GVTGSGKT) contacts ATP. The Beta-hairpin motif lies at 89 to 112 (YYDYYQPEAYIPTKDLYIEKNADI). The region spanning 429-588 (DLVNEIVKVK…ITPRSVIKPL (160 aa)) is the Helicase C-terminal domain. The 36-residue stretch at 622–657 (EEYMAVLEEEMYRAASELRYEDAAALRDELFRIREE) folds into the UVR domain.

It belongs to the UvrB family. As to quaternary structure, forms a heterotetramer with UvrA during the search for lesions. Interacts with UvrC in an incision complex.

The protein localises to the cytoplasm. Functionally, the UvrABC repair system catalyzes the recognition and processing of DNA lesions. A damage recognition complex composed of 2 UvrA and 2 UvrB subunits scans DNA for abnormalities. Upon binding of the UvrA(2)B(2) complex to a putative damaged site, the DNA wraps around one UvrB monomer. DNA wrap is dependent on ATP binding by UvrB and probably causes local melting of the DNA helix, facilitating insertion of UvrB beta-hairpin between the DNA strands. Then UvrB probes one DNA strand for the presence of a lesion. If a lesion is found the UvrA subunits dissociate and the UvrB-DNA preincision complex is formed. This complex is subsequently bound by UvrC and the second UvrB is released. If no lesion is found, the DNA wraps around the other UvrB subunit that will check the other stand for damage. In Thermotoga maritima (strain ATCC 43589 / DSM 3109 / JCM 10099 / NBRC 100826 / MSB8), this protein is UvrABC system protein B.